The chain runs to 593 residues: ATP-dependent lipid A-core flippase (593 aa).

A run of 6 helical transmembrane segments spans residues Ile33 to Ile53, Trp75 to Ser95, Ala137 to Val157, Ile164 to Ile184, Gln262 to Val282, and Gly292 to Ile312. In terms of domain architecture, ABC transmembrane type-1 spans Val37–Arg320. Residues Ile352–Ile586 enclose the ABC transporter domain. Gly386–Thr393 lines the ATP pocket.

This sequence belongs to the ABC transporter superfamily. Lipid exporter (TC 3.A.1.106) family. In terms of assembly, homodimer.

It localises to the cell inner membrane. It catalyses the reaction ATP + H2O + lipid A-core oligosaccharideSide 1 = ADP + phosphate + lipid A-core oligosaccharideSide 2.. Its function is as follows. Involved in lipopolysaccharide (LPS) biosynthesis. Translocates lipid A-core from the inner to the outer leaflet of the inner membrane. Transmembrane domains (TMD) form a pore in the inner membrane and the ATP-binding domain (NBD) is responsible for energy generation. The protein is ATP-dependent lipid A-core flippase of Burkholderia orbicola (strain AU 1054).